We begin with the raw amino-acid sequence, 89 residues long: Small ribosomal subunit protein bS20 (89 aa).

It belongs to the bacterial ribosomal protein bS20 family.

Its function is as follows. Binds directly to 16S ribosomal RNA. The polypeptide is Small ribosomal subunit protein bS20 (Solidesulfovibrio magneticus (strain ATCC 700980 / DSM 13731 / RS-1) (Desulfovibrio magneticus)).